Reading from the N-terminus, the 56-residue chain is MAKADYNKRKPRKFGKGARRCIRCGQYGPIIRIQGLMLCRHCFREVAPKLGFRKYE.

Residues cysteine 21, cysteine 24, cysteine 39, and cysteine 42 each contribute to the Zn(2+) site.

Belongs to the universal ribosomal protein uS14 family. Zinc-binding uS14 subfamily. In terms of assembly, part of the 30S ribosomal subunit. Requires Zn(2+) as cofactor.

Its function is as follows. Binds 16S rRNA, required for the assembly of 30S particles. The protein is Small ribosomal subunit protein uS14 of Pyrococcus furiosus (strain ATCC 43587 / DSM 3638 / JCM 8422 / Vc1).